Here is a 311-residue protein sequence, read N- to C-terminus: Biotin synthase (311 aa).

Residues 32 to 258 (NGVQFCQLLN…LFPLSRIRLA (227 aa)) enclose the Radical SAM core domain. Cys-47, Cys-51, and Cys-54 together coordinate [4Fe-4S] cluster. Cys-91, Cys-124, Cys-184, and Arg-256 together coordinate [2Fe-2S] cluster.

This sequence belongs to the radical SAM superfamily. Biotin synthase family. In terms of assembly, homodimer. [4Fe-4S] cluster serves as cofactor. It depends on [2Fe-2S] cluster as a cofactor.

It catalyses the reaction (4R,5S)-dethiobiotin + (sulfur carrier)-SH + 2 reduced [2Fe-2S]-[ferredoxin] + 2 S-adenosyl-L-methionine = (sulfur carrier)-H + biotin + 2 5'-deoxyadenosine + 2 L-methionine + 2 oxidized [2Fe-2S]-[ferredoxin]. It functions in the pathway cofactor biosynthesis; biotin biosynthesis; biotin from 7,8-diaminononanoate: step 2/2. Catalyzes the conversion of dethiobiotin (DTB) to biotin by the insertion of a sulfur atom into dethiobiotin via a radical-based mechanism. The sequence is that of Biotin synthase from Methylacidiphilum infernorum (isolate V4) (Methylokorus infernorum (strain V4)).